Here is a 329-residue protein sequence, read N- to C-terminus: Acetyl-coenzyme A carboxylase carboxyl transferase subunit alpha (329 aa).

The region spanning 40 to 294 (QLETLAARRR…KNALEKHLSE (255 aa)) is the CoA carboxyltransferase C-terminal domain.

It belongs to the AccA family. Acetyl-CoA carboxylase is a heterohexamer composed of biotin carboxyl carrier protein (AccB), biotin carboxylase (AccC) and two subunits each of ACCase subunit alpha (AccA) and ACCase subunit beta (AccD).

The protein localises to the cytoplasm. The enzyme catalyses N(6)-carboxybiotinyl-L-lysyl-[protein] + acetyl-CoA = N(6)-biotinyl-L-lysyl-[protein] + malonyl-CoA. The protein operates within lipid metabolism; malonyl-CoA biosynthesis; malonyl-CoA from acetyl-CoA: step 1/1. Functionally, component of the acetyl coenzyme A carboxylase (ACC) complex. First, biotin carboxylase catalyzes the carboxylation of biotin on its carrier protein (BCCP) and then the CO(2) group is transferred by the carboxyltransferase to acetyl-CoA to form malonyl-CoA. This is Acetyl-coenzyme A carboxylase carboxyl transferase subunit alpha from Prochlorococcus marinus (strain NATL2A).